A 212-amino-acid polypeptide reads, in one-letter code: Imidazole glycerol phosphate synthase subunit HisH (212 aa).

One can recognise a Glutamine amidotransferase type-1 domain in the interval 2-212 (KVAVIDYGMG…KNFLAWDGNV (211 aa)). Residue cysteine 82 is the Nucleophile of the active site. Residues histidine 190 and glutamate 192 contribute to the active site.

Heterodimer of HisH and HisF.

It localises to the cytoplasm. The catalysed reaction is 5-[(5-phospho-1-deoxy-D-ribulos-1-ylimino)methylamino]-1-(5-phospho-beta-D-ribosyl)imidazole-4-carboxamide + L-glutamine = D-erythro-1-(imidazol-4-yl)glycerol 3-phosphate + 5-amino-1-(5-phospho-beta-D-ribosyl)imidazole-4-carboxamide + L-glutamate + H(+). It carries out the reaction L-glutamine + H2O = L-glutamate + NH4(+). It functions in the pathway amino-acid biosynthesis; L-histidine biosynthesis; L-histidine from 5-phospho-alpha-D-ribose 1-diphosphate: step 5/9. IGPS catalyzes the conversion of PRFAR and glutamine to IGP, AICAR and glutamate. The HisH subunit catalyzes the hydrolysis of glutamine to glutamate and ammonia as part of the synthesis of IGP and AICAR. The resulting ammonia molecule is channeled to the active site of HisF. The chain is Imidazole glycerol phosphate synthase subunit HisH from Chromobacterium violaceum (strain ATCC 12472 / DSM 30191 / JCM 1249 / CCUG 213 / NBRC 12614 / NCIMB 9131 / NCTC 9757 / MK).